Here is a 327-residue protein sequence, read N- to C-terminus: Delta-aminolevulinic acid dehydratase (327 aa).

Zn(2+)-binding residues include C119, C121, and C129. Catalysis depends on K198, which acts as the Schiff-base intermediate with substrate. The 5-aminolevulinate site is built by R208 and R220. E236 is a Mg(2+) binding site. K251 serves as the catalytic Schiff-base intermediate with substrate. 5-aminolevulinate-binding residues include S277 and Y316.

This sequence belongs to the ALAD family. As to quaternary structure, homooctamer. Zn(2+) serves as cofactor.

It carries out the reaction 2 5-aminolevulinate = porphobilinogen + 2 H2O + H(+). It functions in the pathway porphyrin-containing compound metabolism; protoporphyrin-IX biosynthesis; coproporphyrinogen-III from 5-aminolevulinate: step 1/4. Its function is as follows. Catalyzes an early step in the biosynthesis of tetrapyrroles. Binds two molecules of 5-aminolevulinate per subunit, each at a distinct site, and catalyzes their condensation to form porphobilinogen. The polypeptide is Delta-aminolevulinic acid dehydratase (hemB) (Synechocystis sp. (strain ATCC 27184 / PCC 6803 / Kazusa)).